Consider the following 81-residue polypeptide: Cytochrome b559 subunit alpha (81 aa).

A helical transmembrane segment spans residues 22–36 (VIHSITIPSLFIAGW). His-24 is a binding site for heme.

This sequence belongs to the PsbE/PsbF family. As to quaternary structure, heterodimer of an alpha subunit and a beta subunit. PSII is composed of 1 copy each of membrane proteins PsbA, PsbB, PsbC, PsbD, PsbE, PsbF, PsbH, PsbI, PsbJ, PsbK, PsbL, PsbM, PsbT, PsbX, PsbY, PsbZ, Psb30/Ycf12, at least 3 peripheral proteins of the oxygen-evolving complex and a large number of cofactors. It forms dimeric complexes. It depends on heme b as a cofactor.

It localises to the plastid. The protein resides in the chloroplast thylakoid membrane. In terms of biological role, this b-type cytochrome is tightly associated with the reaction center of photosystem II (PSII). PSII is a light-driven water:plastoquinone oxidoreductase that uses light energy to abstract electrons from H(2)O, generating O(2) and a proton gradient subsequently used for ATP formation. It consists of a core antenna complex that captures photons, and an electron transfer chain that converts photonic excitation into a charge separation. The protein is Cytochrome b559 subunit alpha of Cyanidioschyzon merolae (strain NIES-3377 / 10D) (Unicellular red alga).